The primary structure comprises 5588 residues: Histone-lysine N-methyltransferase 2D (5588 aa).

The tract at residues Met-1–Gly-61 is disordered. The C2HC pre-PHD-type 1; degenerate zinc finger occupies Gly-104 to Val-149. PHD-type zinc fingers lie at residues Gln-170–Ser-218 and Cys-270–Cys-323. The PHD-type 2; degenerate zinc-finger motif lies at Glu-226–Cys-276. Residues Cys-229–Lys-274 form an RING-type 1; atypical zinc finger. An RING-type 2; degenerate zinc finger spans residues Cys-276–Arg-321. Disordered regions lie at residues Met-438 to Ile-908 and Leu-922 to Thr-1315. Residues Pro-439–Glu-642 are 15 X 5 AA repeats of S/P-P-P-E/P-E/A. Residues Leu-440–Glu-463 show a composition bias toward pro residues. 4 repeat units span residues Pro-442–Glu-446, Pro-460–Ala-464, Pro-469–Glu-473, and Ser-477–Glu-481. The span at Ala-464–Pro-475 shows a compositional bias: low complexity. Composition is skewed to pro residues over residues Gly-490–Pro-512 and Leu-519–Glu-560. A run of 4 repeats spans residues Ser-520–Glu-524, Ser-529–Glu-533, Ser-538–Glu-542, and Ser-547–Glu-551. Positions Ala-561 to Pro-572 are enriched in low complexity. A compositionally biased stretch (pro residues) spans Leu-573–Glu-614. 4 consecutive repeat copies span residues Ser-574 to Glu-578, Ser-583 to Glu-587, Ser-592 to Glu-596, and Ser-610 to Glu-614. The span at Leu-619–Leu-636 shows a compositional bias: low complexity. The stretch at Ser-637 to Glu-641 is repeat 15. Positions Ser-637 to Glu-677 are enriched in pro residues. Residues Asp-696–Pro-712 show a composition bias toward low complexity. The residue at position 727 (Ser-727) is a Phosphoserine. Low complexity-rich tracts occupy residues Leu-735–Pro-755, Pro-836–Ser-851, and Leu-876–Gln-893. 3 stretches are compositionally biased toward pro residues: residues Leu-894–Ile-908, Glu-959–Pro-973, and Leu-985–Leu-1012. Residues Pro-1013–Val-1023 are compositionally biased toward low complexity. Residues Ala-1033–Glu-1045 show a composition bias toward basic and acidic residues. PHD-type zinc fingers lie at residues Pro-1071 to Val-1124, Pro-1121 to Asp-1171, and Leu-1198 to Arg-1253. Ser-1107 carries the phosphoserine modification. The span at Glu-1163 to Ala-1172 shows a compositional bias: polar residues. The RING-type 3; atypical zinc finger occupies Ser-1201–Pro-1251. Ser-1205 is subject to Phosphoserine. At Thr-1223 the chain carries Phosphothreonine. Ser-1226 is subject to Phosphoserine. Positions Gly-1245–Gln-1258 are enriched in basic residues. Ser-1562 is modified (phosphoserine). 4 disordered regions span residues Lys-1566–Glu-1721, Gly-1751–Lys-1846, Gly-1886–Arg-1962, and Ser-2095–Arg-2641. Positions Pro-1593–Lys-1608 are enriched in basic and acidic residues. A Phosphoserine modification is found at Ser-1627. Over residues Glu-1631–Lys-1641 the composition is skewed to basic and acidic residues. 2 stretches are compositionally biased toward basic residues: residues Arg-1658–Arg-1668 and Lys-1709–Ser-1718. Residues Pro-1762–Asp-1782 show a composition bias toward basic and acidic residues. Phosphoserine is present on Ser-1791. At Thr-1822 the chain carries Phosphothreonine. Basic and acidic residues predominate over residues Asp-1831–Lys-1846. Low complexity-rich tracts occupy residues Gly-1886–Ser-1896 and Thr-1936–Glu-1947. Pro residues predominate over residues Pro-2151–Pro-2166. Residues Gly-2170 to Gly-2181 show a composition bias toward low complexity. Ser-2196 carries the post-translational modification Phosphoserine. At Thr-2197 the chain carries Phosphothreonine. N6-acetyllysine is present on Lys-2203. A phosphoserine mark is found at Ser-2217 and Ser-2231. Positions Glu-2237–Leu-2249 are enriched in basic and acidic residues. Residues Ser-2266, Ser-2268, and Ser-2299 each carry the phosphoserine modification. Composition is skewed to pro residues over residues Glu-2308–His-2322 and Tyr-2331–Ser-2359. Over residues Ser-2366 to Ser-2388 the composition is skewed to low complexity. Positions Gly-2470–Gly-2486 are enriched in polar residues. Arg-2492 is modified (asymmetric dimethylarginine). Positions Leu-2504–Pro-2514 are enriched in pro residues. Residues Pro-2546–Pro-2557 are compositionally biased toward low complexity. Residue Ser-2597 is modified to Phosphoserine. The segment covering Ser-2610–Ala-2622 has biased composition (low complexity). A coiled-coil region spans residues Ile-2627 to Ala-2665. The LXXLL motif 1 motif lies at Leu-2644–Leu-2648. The interval Arg-2655–Gln-2806 is disordered. Over residues Ala-2665 to Ala-2680 the composition is skewed to low complexity. Composition is skewed to polar residues over residues Ser-2691–Ser-2704 and Pro-2739–Gln-2748. Residues Leu-2768–Ala-2813 are a coiled coil. Residues Gln-2769 to Gln-2806 show a composition bias toward low complexity. Asymmetric dimethylarginine is present on Arg-2829. Positions Leu-3030 to Leu-3034 match the LXXLL motif 2 motif. Residues Asn-3069–Thr-3104 are disordered. Lys-3071 is modified (N6-acetyllysine). Ser-3122 and Ser-3193 each carry phosphoserine. Disordered stretches follow at residues Asn-3129–Ser-3193 and Gln-3271–Val-3326. The segment covering Gln-3271–Gln-3284 has biased composition (low complexity). Lys-3430 is modified (N6-acetyllysine). Disordered regions lie at residues Ser-3460–Gln-3496, Arg-3593–Val-3617, Leu-3633–Val-3661, and Gln-3678–Leu-3704. Positions Glu-3559 to Ala-3613 form a coiled coil. Low complexity predominate over residues Gln-3596 to Gln-3610. A coiled-coil region spans residues Arg-3712–His-3747. Arg-3725 bears the Asymmetric dimethylarginine mark. 2 disordered regions span residues Pro-3760–His-3780 and Leu-3808–His-3827. Coiled-coil stretches lie at residues Arg-3854–Gln-3883 and Ser-3912–Leu-4052. The tract at residues Gly-4053 to Pro-4249 is disordered. Composition is skewed to low complexity over residues Ser-4128–Gln-4159, Gly-4172–Ser-4183, and Gly-4226–Gln-4240. At Arg-4255 the chain carries Asymmetric dimethylarginine. Residue Ser-4272 is modified to Phosphoserine. Residues Leu-4279–Leu-4283 carry the LXXLL motif 3 motif. Positions Gln-4290 to Gln-4452 are disordered. Residues Val-4294–Thr-4305 are compositionally biased toward polar residues. A compositionally biased stretch (low complexity) spans Pro-4307–Gly-4322. The short motif at Leu-4310–Leu-4314 is the LXXLL motif 4 element. Polar residues predominate over residues Gln-4379–His-4391. Ser-4410 is modified (phosphoserine). Positions Asp-4432 to Leu-4445 are enriched in polar residues. Residues Leu-4514–Leu-4518 carry the LXXLL motif 5 motif. Lys-4516 carries the N6-acetyllysine modification. Disordered stretches follow at residues Leu-4553 to Val-4596, Lys-4664 to Leu-4716, and Ala-4729 to Ser-4778. Over residues Pro-4670–Ser-4684 the composition is skewed to pro residues. The residue at position 4789 (Ser-4789) is a Phosphoserine. Lys-4807 participates in a covalent cross-link: Glycyl lysine isopeptide (Lys-Gly) (interchain with G-Cter in SUMO2). Residue Lys-4827 is modified to N6-acetyllysine. The RING-type 4; degenerate zinc finger occupies Lys-4829–Pro-4874. The segment at Ala-4877–Leu-4908 is disordered. Residues Leu-4879–Leu-4896 are compositionally biased toward basic and acidic residues. A Glycyl lysine isopeptide (Lys-Gly) (interchain with G-Cter in SUMO2) cross-link involves residue Lys-4931. The segment at Gln-4956–Lys-5031 is disordered. Positions Ala-4959 to Glu-4982 are enriched in pro residues. Over residues Arg-5017–Pro-5027 the composition is skewed to basic and acidic residues. The LXXLL motif 6 motif lies at Leu-5041–Leu-5045. The C2HC pre-PHD-type 2 zinc finger occupies Asn-5080–Val-5120. A PHD-type 7 zinc finger spans residues Thr-5141–Lys-5188. The FYR N-terminal domain occupies Leu-5226–Asn-5286. Positions Asn-5287–Tyr-5372 constitute an FYR C-terminal domain. The WDR5 interaction motif (WIN) signature appears at Gly-5388–Glu-5393. In terms of domain architecture, SET spans Asn-5448–Gln-5564. Residues Tyr-5502 and Asn-5525–His-5526 contribute to the S-adenosyl-L-methionine site. Zn(2+) contacts are provided by Cys-5528, Cys-5576, Cys-5578, and Cys-5583. A Post-SET domain is found at His-5572–Asn-5588.

The protein belongs to the class V-like SAM-binding methyltransferase superfamily. Histone-lysine methyltransferase family. TRX/MLL subfamily. In terms of assembly, component of the MLL2 complex (also named ASCOM complex), at least composed of catalytic subunit KMT2D/MLL2, ASH2L, RBBP5, WDR5, NCOA6, DPY30, KDM6A, PAXIP1/PTIP, PAGR1 and alpha- and beta-tubulin. Forms a core complex with the evolutionary conserved subcomplex WRAD composed of WDR5, RBBP5, ASH2L/ASH2 and DPY30 subunits; WRAD differentially stimulates the methyltransferase activity. Interacts with ESR1; interaction is direct. Interacts (via WIN motif) with WDR5.

The protein localises to the nucleus. It carries out the reaction L-lysyl(4)-[histone H3] + S-adenosyl-L-methionine = N(6)-methyl-L-lysyl(4)-[histone H3] + S-adenosyl-L-homocysteine + H(+). Its function is as follows. Histone methyltransferase that catalyzes methyl group transfer from S-adenosyl-L-methionine to the epsilon-amino group of 'Lys-4' of histone H3 (H3K4). Part of chromatin remodeling machinery predominantly forms H3K4me1 methylation marks at active chromatin sites where transcription and DNA repair take place. Acts as a coactivator for estrogen receptor by being recruited by ESR1, thereby activating transcription. The protein is Histone-lysine N-methyltransferase 2D (Kmt2d) of Mus musculus (Mouse).